Here is a 127-residue protein sequence, read N- to C-terminus: Transthyretin (127 aa).

Cys10 bears the Sulfocysteine mark. Residue Lys15 coordinates L-thyroxine. Glu42 bears the 4-carboxyglutamate mark. Glu54 is an L-thyroxine binding site. A glycan (N-linked (GlcNAc...) asparagine) is linked at Asn98. Residue Ser117 coordinates L-thyroxine.

The protein belongs to the transthyretin family. Homotetramer. Dimer of dimers. In the homotetramer, subunits assemble around a central channel that can accommodate two ligand molecules. Interacts with RBP4. Sulfonation of the reactive cysteine Cys-10 enhances the stability of the native conformation of TTR, avoiding misassembly of the protein leading to amyloid formation. In terms of tissue distribution, detected in serum (at protein level).

The protein localises to the secreted. Its function is as follows. Thyroid hormone-binding protein. Probably transports thyroxine from the bloodstream to the brain. This chain is Transthyretin (TTR), found in Oryctolagus cuniculus (Rabbit).